Here is a 559-residue protein sequence, read N- to C-terminus: Potassium-transporting ATPase potassium-binding subunit (559 aa).

The next 13 helical transmembrane spans lie at 5 to 25 (GFLL…PLGS), 27 to 47 (LARL…RILW), 63 to 83 (LLAL…LLFW), 132 to 152 (GLTV…FALI), 170 to 190 (LVRI…LFFI), 253 to 273 (LAQM…FGEA), 283 to 303 (LLWA…WAEV), 327 to 347 (FGVL…CGAV), 356 to 376 (ALGG…FGGV), 379 to 399 (GLYG…LMIG), 416 to 436 (MTAL…ALAM), 484 to 504 (LLAF…MAIA), and 524 to 544 (GALF…LTFI).

This sequence belongs to the KdpA family. As to quaternary structure, the system is composed of three essential subunits: KdpA, KdpB and KdpC.

It localises to the cell inner membrane. In terms of biological role, part of the high-affinity ATP-driven potassium transport (or Kdp) system, which catalyzes the hydrolysis of ATP coupled with the electrogenic transport of potassium into the cytoplasm. This subunit binds the periplasmic potassium ions and delivers the ions to the membrane domain of KdpB through an intramembrane tunnel. This chain is Potassium-transporting ATPase potassium-binding subunit, found in Salmonella dublin (strain CT_02021853).